Consider the following 192-residue polypeptide: dCTP deaminase, dUMP-forming (192 aa).

DCTP contacts are provided by residues 101-106 (KSSLGR), Asp119, 127-129 (TLE), Gln148, Tyr162, and Gln174. Catalysis depends on Glu129, which acts as the Proton donor/acceptor. Residues 165–184 (GAYGNRYQGQRGPTASRSHL) are disordered. A compositionally biased stretch (polar residues) spans 171-183 (YQGQRGPTASRSH).

This sequence belongs to the dCTP deaminase family. Homotrimer.

It catalyses the reaction dCTP + 2 H2O = dUMP + NH4(+) + diphosphate. Its pathway is pyrimidine metabolism; dUMP biosynthesis; dUMP from dCTP: step 1/1. In terms of biological role, bifunctional enzyme that catalyzes both the deamination of dCTP to dUTP and the hydrolysis of dUTP to dUMP without releasing the toxic dUTP intermediate. The sequence is that of dCTP deaminase, dUMP-forming from Kocuria rhizophila (strain ATCC 9341 / DSM 348 / NBRC 103217 / DC2201).